Here is a 599-residue protein sequence, read N- to C-terminus: Elongation factor 4 (599 aa).

One can recognise a tr-type G domain in the interval S5–E187. Residues D17–T22 and N134–D137 contribute to the GTP site.

Belongs to the TRAFAC class translation factor GTPase superfamily. Classic translation factor GTPase family. LepA subfamily.

It is found in the cell inner membrane. It catalyses the reaction GTP + H2O = GDP + phosphate + H(+). Required for accurate and efficient protein synthesis under certain stress conditions. May act as a fidelity factor of the translation reaction, by catalyzing a one-codon backward translocation of tRNAs on improperly translocated ribosomes. Back-translocation proceeds from a post-translocation (POST) complex to a pre-translocation (PRE) complex, thus giving elongation factor G a second chance to translocate the tRNAs correctly. Binds to ribosomes in a GTP-dependent manner. The protein is Elongation factor 4 of Pseudomonas paraeruginosa (strain DSM 24068 / PA7) (Pseudomonas aeruginosa (strain PA7)).